An 89-amino-acid chain; its full sequence is Large ribosomal subunit protein bL31B (89 aa).

The tract at residues 70-89 (RVQRFESRRRRRQQQSGEQG) is disordered.

It belongs to the bacterial ribosomal protein bL31 family. Type B subfamily. Part of the 50S ribosomal subunit.

The protein is Large ribosomal subunit protein bL31B of Rubrobacter xylanophilus (strain DSM 9941 / JCM 11954 / NBRC 16129 / PRD-1).